Reading from the N-terminus, the 130-residue chain is Phosphoribosyl-AMP cyclohydrolase (130 aa).

Position 78 (Asp-78) interacts with Mg(2+). Cys-79 is a binding site for Zn(2+). Mg(2+) is bound by residues Asp-80 and Asp-82. The Zn(2+) site is built by Cys-96 and Cys-103.

This sequence belongs to the PRA-CH family. Homodimer. Requires Mg(2+) as cofactor. Zn(2+) serves as cofactor.

It is found in the cytoplasm. It carries out the reaction 1-(5-phospho-beta-D-ribosyl)-5'-AMP + H2O = 1-(5-phospho-beta-D-ribosyl)-5-[(5-phospho-beta-D-ribosylamino)methylideneamino]imidazole-4-carboxamide. Its pathway is amino-acid biosynthesis; L-histidine biosynthesis; L-histidine from 5-phospho-alpha-D-ribose 1-diphosphate: step 3/9. Its function is as follows. Catalyzes the hydrolysis of the adenine ring of phosphoribosyl-AMP. This Methylobacillus flagellatus (strain ATCC 51484 / DSM 6875 / VKM B-1610 / KT) protein is Phosphoribosyl-AMP cyclohydrolase.